The following is a 149-amino-acid chain: VapC ribonuclease PF0355 (149 aa).

The 115-residue stretch at 8–122 folds into the PINc domain; it reads TFDSLALIKM…ITDDSKRYEP (115 aa). The Mg(2+) site is built by aspartate 10 and aspartate 98.

This sequence belongs to the PINc/VapC protein family. Mg(2+) serves as cofactor.

Toxic component of a type II toxin-antitoxin (TA) system. An RNase. The chain is VapC ribonuclease PF0355 from Pyrococcus furiosus (strain ATCC 43587 / DSM 3638 / JCM 8422 / Vc1).